The sequence spans 670 residues: Tripeptidyl-peptidase SED1 (670 aa).

Residues 1–20 form the signal peptide; sequence MSTMIFMYFIYIVLYASGIA. The propeptide at 21 to 231 is removed in mature form; the sequence is ANLSYHVHEK…VGLLKNKILS (211 aa). Residues 241 to 669 enclose the Peptidase S53 domain; it reads LITPDCLRAL…DRMLDLFLQL (429 aa). Residues glutamate 318 and aspartate 322 each act as charge relay system in the active site. N-linked (GlcNAc...) asparagine glycans are attached at residues asparagine 334, asparagine 387, asparagine 488, asparagine 508, and asparagine 551. The active-site Charge relay system is serine 586. Aspartate 627, valine 628, glycine 647, and aspartate 649 together coordinate Ca(2+).

It depends on Ca(2+) as a cofactor.

It localises to the secreted. Its subcellular location is the extracellular space. It catalyses the reaction Release of an N-terminal tripeptide from a polypeptide.. In terms of biological role, secreted tripeptidyl-peptidase which degrades proteins at acidic pHs and is involved in virulence. This is Tripeptidyl-peptidase SED1 (SED1) from Arthroderma otae (strain ATCC MYA-4605 / CBS 113480) (Microsporum canis).